Consider the following 590-residue polypeptide: Mannosyl-oligosaccharide 1,2-alpha-mannosidase mans-2 (590 aa).

Topologically, residues 1–9 (MKTVRFNKQ) are cytoplasmic. Residues 10-30 (ALAILAACFIFLLCVVCYFSA) traverse the membrane as a helical; Signal-anchor for type II membrane protein segment. Over 31–590 (SSESHNAVVV…EAHPVPVLTN (560 aa)) the chain is Lumenal. Residues 88-102 (PARVESKPPGEKTST) show a composition bias toward basic and acidic residues. Positions 88 to 112 (PARVESKPPGEKTSTEPEETGVGKA) are disordered. Residues Asn156, Asn212, Asn373, and Asn402 are each glycosylated (N-linked (GlcNAc...) asparagine). Residues Cys423 and Cys456 are joined by a disulfide bond. The active-site Proton donor is the Glu470. Residue Thr580 coordinates Ca(2+).

The protein belongs to the glycosyl hydrolase 47 family. Ca(2+) serves as cofactor.

It is found in the membrane. It catalyses the reaction N(4)-(alpha-D-Man-(1-&gt;2)-alpha-D-Man-(1-&gt;2)-alpha-D-Man-(1-&gt;3)-[alpha-D-Man-(1-&gt;2)-alpha-D-Man-(1-&gt;3)-[alpha-D-Man-(1-&gt;2)-alpha-D-Man-(1-&gt;6)]-alpha-D-Man-(1-&gt;6)]-beta-D-Man-(1-&gt;4)-beta-D-GlcNAc-(1-&gt;4)-beta-D-GlcNAc)-L-asparaginyl-[protein] (N-glucan mannose isomer 9A1,2,3B1,2,3) + 4 H2O = N(4)-(alpha-D-Man-(1-&gt;3)-[alpha-D-Man-(1-&gt;3)-[alpha-D-Man-(1-&gt;6)]-alpha-D-Man-(1-&gt;6)]-beta-D-Man-(1-&gt;4)-beta-D-GlcNAc-(1-&gt;4)-beta-D-GlcNAc)-L-asparaginyl-[protein] (N-glucan mannose isomer 5A1,2) + 4 beta-D-mannose. The enzyme catalyses N(4)-(alpha-D-Man-(1-&gt;2)-alpha-D-Man-(1-&gt;2)-alpha-D-Man-(1-&gt;3)-[alpha-D-Man-(1-&gt;3)-[alpha-D-Man-(1-&gt;2)-alpha-D-Man-(1-&gt;6)]-alpha-D-Man-(1-&gt;6)]-beta-D-Man-(1-&gt;4)-beta-D-GlcNAc-(1-&gt;4)-beta-D-GlcNAc)-L-asparaginyl-[protein] (N-glucan mannose isomer 8A1,2,3B1,3) + 3 H2O = N(4)-(alpha-D-Man-(1-&gt;3)-[alpha-D-Man-(1-&gt;3)-[alpha-D-Man-(1-&gt;6)]-alpha-D-Man-(1-&gt;6)]-beta-D-Man-(1-&gt;4)-beta-D-GlcNAc-(1-&gt;4)-beta-D-GlcNAc)-L-asparaginyl-[protein] (N-glucan mannose isomer 5A1,2) + 3 beta-D-mannose. It participates in protein modification; protein glycosylation. Involved in the maturation of Asn-linked oligosaccharides. Progressively trim alpha-1,2-linked mannose residues from Man(9)GlcNAc(2) to produce Man(5)GlcNAc(2). This Caenorhabditis elegans protein is Mannosyl-oligosaccharide 1,2-alpha-mannosidase mans-2.